Consider the following 149-residue polypeptide: Arginine repressor (149 aa).

This sequence belongs to the ArgR family.

Its subcellular location is the cytoplasm. It functions in the pathway amino-acid biosynthesis; L-arginine biosynthesis [regulation]. Functionally, regulates arginine biosynthesis genes. This is Arginine repressor from Exiguobacterium sp. (strain ATCC BAA-1283 / AT1b).